The sequence spans 435 residues: Galactomannan galactosyltransferase 1 (435 aa).

Residues 1–20 (MAKFGSRNKSPKWISNGCCF) are Cytoplasmic-facing. A helical; Signal-anchor for type II membrane protein transmembrane segment spans residues 21 to 41 (LLGAFTALLLLWGLCSFIIPI). Residues 42 to 435 (PNTDPKLNSV…SPLPFGYPAA (394 aa)) lie on the Lumenal side of the membrane. Residues Asn230 and Asn328 are each glycosylated (N-linked (GlcNAc...) asparagine). The stretch at 321-354 (EIVKTYENISERYDEVERKVEGLRRRHAEKVSEK) forms a coiled coil.

This sequence belongs to the glycosyltransferase 34 family.

The protein localises to the golgi apparatus membrane. Functionally, galactomannan galactosyltransferase (GMGT) involved in galactomannan biosynthesis in seed endosperm. GMGT specificity is an important factor regulating the distribution and amount of alpha-1,6-galactose (Gal) substitution of the beta-1,4-linked mannan backbone. The chain is Galactomannan galactosyltransferase 1 (GMGT1) from Cyamopsis tetragonoloba (Guar).